Reading from the N-terminus, the 380-residue chain is Queuine tRNA-ribosyltransferase (380 aa).

Asp-96 functions as the Proton acceptor in the catalytic mechanism. Substrate is bound by residues 96–100 (DSGGF), Asp-150, Gln-193, and Gly-220. An RNA binding region spans residues 251 to 257 (GVGAPDS). The active-site Nucleophile is the Asp-270. The segment at 275-279 (TRIAR) is RNA binding; important for wobble base 34 recognition. Residues Cys-308, Cys-310, Cys-313, and His-339 each contribute to the Zn(2+) site.

It belongs to the queuine tRNA-ribosyltransferase family. In terms of assembly, homodimer. Within each dimer, one monomer is responsible for RNA recognition and catalysis, while the other monomer binds to the replacement base PreQ1. Zn(2+) serves as cofactor.

It carries out the reaction 7-aminomethyl-7-carbaguanine + guanosine(34) in tRNA = 7-aminomethyl-7-carbaguanosine(34) in tRNA + guanine. Its pathway is tRNA modification; tRNA-queuosine biosynthesis. In terms of biological role, catalyzes the base-exchange of a guanine (G) residue with the queuine precursor 7-aminomethyl-7-deazaguanine (PreQ1) at position 34 (anticodon wobble position) in tRNAs with GU(N) anticodons (tRNA-Asp, -Asn, -His and -Tyr). Catalysis occurs through a double-displacement mechanism. The nucleophile active site attacks the C1' of nucleotide 34 to detach the guanine base from the RNA, forming a covalent enzyme-RNA intermediate. The proton acceptor active site deprotonates the incoming PreQ1, allowing a nucleophilic attack on the C1' of the ribose to form the product. After dissociation, two additional enzymatic reactions on the tRNA convert PreQ1 to queuine (Q), resulting in the hypermodified nucleoside queuosine (7-(((4,5-cis-dihydroxy-2-cyclopenten-1-yl)amino)methyl)-7-deazaguanosine). In Streptococcus agalactiae serotype Ia (strain ATCC 27591 / A909 / CDC SS700), this protein is Queuine tRNA-ribosyltransferase.